We begin with the raw amino-acid sequence, 209 residues long: Ribosomal RNA large subunit methyltransferase E (209 aa).

Residues Gly63, Trp65, Asp83, Asp99, and Asp124 each contribute to the S-adenosyl-L-methionine site. Lys164 functions as the Proton acceptor in the catalytic mechanism.

It belongs to the class I-like SAM-binding methyltransferase superfamily. RNA methyltransferase RlmE family.

The protein resides in the cytoplasm. The enzyme catalyses uridine(2552) in 23S rRNA + S-adenosyl-L-methionine = 2'-O-methyluridine(2552) in 23S rRNA + S-adenosyl-L-homocysteine + H(+). Functionally, specifically methylates the uridine in position 2552 of 23S rRNA at the 2'-O position of the ribose in the fully assembled 50S ribosomal subunit. This is Ribosomal RNA large subunit methyltransferase E from Vibrio cholerae serotype O1 (strain ATCC 39541 / Classical Ogawa 395 / O395).